The sequence spans 487 residues: Serine/threonine-protein kinase BSK7 (487 aa).

Residue G2 is the site of N-myristoyl glycine attachment. The Protein kinase domain occupies 59-325 (ENIVSEHGEK…DLETPSHQLM (267 aa)). ATP contacts are provided by residues 65–73 (HGEKAPNVV) and K87. D181 functions as the Proton acceptor in the catalytic mechanism.

It belongs to the protein kinase superfamily. Ser/Thr protein kinase family.

It is found in the cell membrane. The catalysed reaction is L-seryl-[protein] + ATP = O-phospho-L-seryl-[protein] + ADP + H(+). It carries out the reaction L-threonyl-[protein] + ATP = O-phospho-L-threonyl-[protein] + ADP + H(+). In terms of biological role, probable serine/threonine kinase that acts as a positive regulator of brassinosteroid (BR) signaling downstream of the receptor kinase BRI1. Functions redundantly with BSK3, BSK5, BSK6 and BSK8. In Arabidopsis thaliana (Mouse-ear cress), this protein is Serine/threonine-protein kinase BSK7.